Reading from the N-terminus, the 557-residue chain is MRSDMIKKGFDKAPHRSLLKATGLKDEDFDKPFIAICNSFIEIIPGHKHLNEFGKLVKEAVRAAGMVPFEFNTIGVDDGIAMGHIGMRYSLPSREIIADSVETVVNAHWFDGMICIPNCDKITPGMMMAALRINIPTVFVSGGPMAAGKTSKGDVVDLSSVFEGVGAYQSGKISEEELKDIEDHGCPSCGSCSGMFTANSMNCLCEVLGLALPGNGSILAIDPRREELIKQAAEKLKILIERDIKPRDIVTEEAIDDAFALDMAMGGSTNTVLHTLALAQEAGLDYDMNRIDAVSRRVPHLCKVSPASNWHMEDIDRAGGISAILKEMSRKEGVLHLDRITATGQTLRENIAHAEIKDKEVIHSLENPHSEEGGLRILKGNLAKDGAVIKSGATEVKRFEGPCVIFNSQDEALAGIMLGKVKKGDVVVIRYEGPRGGPGMPEMLAPTSAIAGMGLGADVALLTDGRFSGASRGISVGHISPEAAAGGTIALLEQGDIVCIDVEERLLEVRVSDEELGKRKKEWKRPEPKVKTGWLGRYAQMVTSANTGAVLKIPNFD.

Mg(2+) is bound at residue aspartate 78. Cysteine 119 provides a ligand contact to [2Fe-2S] cluster. Residues aspartate 120 and lysine 121 each coordinate Mg(2+). N6-carboxylysine is present on lysine 121. Cysteine 192 serves as a coordination point for [2Fe-2S] cluster. Glutamate 442 is a binding site for Mg(2+). The active-site Proton acceptor is serine 468.

The protein belongs to the IlvD/Edd family. In terms of assembly, homodimer. The cofactor is [2Fe-2S] cluster. Mg(2+) serves as cofactor.

It carries out the reaction (2R)-2,3-dihydroxy-3-methylbutanoate = 3-methyl-2-oxobutanoate + H2O. The catalysed reaction is (2R,3R)-2,3-dihydroxy-3-methylpentanoate = (S)-3-methyl-2-oxopentanoate + H2O. It functions in the pathway amino-acid biosynthesis; L-isoleucine biosynthesis; L-isoleucine from 2-oxobutanoate: step 3/4. Its pathway is amino-acid biosynthesis; L-valine biosynthesis; L-valine from pyruvate: step 3/4. Functions in the biosynthesis of branched-chain amino acids. Catalyzes the dehydration of (2R,3R)-2,3-dihydroxy-3-methylpentanoate (2,3-dihydroxy-3-methylvalerate) into 2-oxo-3-methylpentanoate (2-oxo-3-methylvalerate) and of (2R)-2,3-dihydroxy-3-methylbutanoate (2,3-dihydroxyisovalerate) into 2-oxo-3-methylbutanoate (2-oxoisovalerate), the penultimate precursor to L-isoleucine and L-valine, respectively. This is Dihydroxy-acid dehydratase from Bacillus anthracis (strain A0248).